The sequence spans 431 residues: 3-phosphoshikimate 1-carboxyvinyltransferase (431 aa).

Lys-21, Ser-22, and Arg-26 together coordinate 3-phosphoshikimate. Position 21 (Lys-21) interacts with phosphoenolpyruvate. Phosphoenolpyruvate is bound by residues Gly-94 and Arg-122. Ser-167, Gln-169, Asp-315, and Lys-342 together coordinate 3-phosphoshikimate. A phosphoenolpyruvate-binding site is contributed by Gln-169. Asp-315 acts as the Proton acceptor in catalysis. Residues Arg-346 and Arg-388 each contribute to the phosphoenolpyruvate site.

It belongs to the EPSP synthase family. As to quaternary structure, monomer.

The protein resides in the cytoplasm. It carries out the reaction 3-phosphoshikimate + phosphoenolpyruvate = 5-O-(1-carboxyvinyl)-3-phosphoshikimate + phosphate. Its pathway is metabolic intermediate biosynthesis; chorismate biosynthesis; chorismate from D-erythrose 4-phosphate and phosphoenolpyruvate: step 6/7. Its function is as follows. Catalyzes the transfer of the enolpyruvyl moiety of phosphoenolpyruvate (PEP) to the 5-hydroxyl of shikimate-3-phosphate (S3P) to produce enolpyruvyl shikimate-3-phosphate and inorganic phosphate. This Pelotomaculum thermopropionicum (strain DSM 13744 / JCM 10971 / SI) protein is 3-phosphoshikimate 1-carboxyvinyltransferase.